The chain runs to 350 residues: Very-long-chain 3-oxoacyl-CoA reductase (350 aa).

Residues 20-40 (ALLFSLLFGVFKLTTFTLRFA) traverse the membrane as a helical segment. Positions 66, 120, 147, 221, 225, 254, and 256 each coordinate NADP(+). Tyr221 functions as the Proton donor in the catalytic mechanism. Lys225 functions as the Lowers pKa of active site Tyr in the catalytic mechanism.

Belongs to the short-chain dehydrogenases/reductases (SDR) family.

The protein localises to the endoplasmic reticulum membrane. The catalysed reaction is a very-long-chain (3R)-3-hydroxyacyl-CoA + NADP(+) = a very-long-chain 3-oxoacyl-CoA + NADPH + H(+). It functions in the pathway lipid metabolism; fatty acid biosynthesis. Functionally, component of the microsomal membrane bound fatty acid elongation system, which produces the 26-carbon very long-chain fatty acids (VLCFA) from palmitate. Catalyzes the reduction of the 3-ketoacyl-CoA intermediate that is formed in each cycle of fatty acid elongation. VLCFAs serve as precursors for ceramide and sphingolipids. The chain is Very-long-chain 3-oxoacyl-CoA reductase from Lodderomyces elongisporus (strain ATCC 11503 / CBS 2605 / JCM 1781 / NBRC 1676 / NRRL YB-4239) (Yeast).